The sequence spans 214 residues: Rac-like GTP-binding protein 1 (214 aa).

Residues G17–T24, A20–C25, T42, D64–Q68, G67, T122–D125, K123–D125, and S164–K165 contribute to the GTP site. The Effector region signature appears at Y39–F47.

Belongs to the small GTPase superfamily. Rho family. In terms of assembly, may interact with MPK1/MAPK6. Binds to RBOHB, preferentially in the GTP-bound form. Interacts with CCR1 in a GTP-dependent manner. In terms of processing, may be palmitoylated.

Its subcellular location is the cytoplasm. The protein localises to the membrane. In terms of biological role, small GTPase playing a general role in disease resistance signaling pathway. Acts downstream of heterotrimeric G protein alpha subunit. Regulates cell death and reactive oxygen species production, probably through NADPH oxidase. Also involved in sphingolipid elicitor (SE)-dependent defense signaling. Activates phytoalexin production and alters defense-related genes. Down-regulates metallothionein 2b, a reactive oxygen scavenger. May control lignin synthesis through regulation of both NADPH oxidase and CCR1 activities during defense responses. Stimulates lignin synthesis in suspension cell culture. The protein is Rac-like GTP-binding protein 1 (RAC1) of Oryza sativa subsp. japonica (Rice).